Reading from the N-terminus, the 380-residue chain is MAPNLRKSHPLLKMINNSLIDLPTPSNISAWWNFGSLLGICLTTQILTGLLLAMHYTADTTLAFSSIAHTCRDVQYGWLIRNMHANGASLLFICIYLHIGRGVYDGSYLHKETWNTGVILLLTLMATAFVGYVLPWGQMSFWGATVITNLFSAIPYIGQTIVEWAWGGFSVDNPTLTRFFALHFLLPFMITGLTLIHLTFLHESGSNNPLGIVANSDKIPFHPYYSTKDILGFTLMLLPLTTLALFSPNLLGDPENFTPANPLVTPPHIKPEWYFLFAYAILRSIPNKLGGVLALAASVLVLFLSPLLHKSKQRTMAFRPLSQLLFWTLVANLLILTWIGSQPVEHPFIIIGQLASTTYFIILLILFPITSALENKMLNF.

4 helical membrane-spanning segments follow: residues 34–54, 78–99, 114–134, and 179–199; these read FGSL…LLAM, WLIR…YLHI, WNTG…GYVL, and FFAL…IHLT. The heme b site is built by His84 and His98. Positions 183 and 197 each coordinate heme b. Residue His202 participates in a ubiquinone binding. 4 helical membrane-spanning segments follow: residues 227–247, 289–309, 321–341, and 348–368; these read TKDI…ALFS, LGGV…PLLH, LSQL…WIGS, and FIII…ILFP.

The protein belongs to the cytochrome b family. The cytochrome bc1 complex contains 11 subunits: 3 respiratory subunits (MT-CYB, CYC1 and UQCRFS1), 2 core proteins (UQCRC1 and UQCRC2) and 6 low-molecular weight proteins (UQCRH/QCR6, UQCRB/QCR7, UQCRQ/QCR8, UQCR10/QCR9, UQCR11/QCR10 and a cleavage product of UQCRFS1). This cytochrome bc1 complex then forms a dimer. It depends on heme b as a cofactor.

The protein resides in the mitochondrion inner membrane. In terms of biological role, component of the ubiquinol-cytochrome c reductase complex (complex III or cytochrome b-c1 complex) that is part of the mitochondrial respiratory chain. The b-c1 complex mediates electron transfer from ubiquinol to cytochrome c. Contributes to the generation of a proton gradient across the mitochondrial membrane that is then used for ATP synthesis. The sequence is that of Cytochrome b (MT-CYB) from Pygoscelis antarcticus (Chinstrap penguin).